A 177-amino-acid polypeptide reads, in one-letter code: Large ribosomal subunit protein uL6 (177 aa).

It belongs to the universal ribosomal protein uL6 family. Part of the 50S ribosomal subunit.

In terms of biological role, this protein binds to the 23S rRNA, and is important in its secondary structure. It is located near the subunit interface in the base of the L7/L12 stalk, and near the tRNA binding site of the peptidyltransferase center. This is Large ribosomal subunit protein uL6 from Pseudomonas fluorescens (strain SBW25).